Reading from the N-terminus, the 858-residue chain is Leucine--tRNA ligase (858 aa).

The short motif at 42-52 (PYPSGRLHMGH) is the 'HIGH' region element. Residues 618-622 (KMSKS) carry the 'KMSKS' region motif. Residue Lys-621 coordinates ATP.

The protein belongs to the class-I aminoacyl-tRNA synthetase family.

It localises to the cytoplasm. It catalyses the reaction tRNA(Leu) + L-leucine + ATP = L-leucyl-tRNA(Leu) + AMP + diphosphate. This is Leucine--tRNA ligase from Vibrio atlanticus (strain LGP32) (Vibrio splendidus (strain Mel32)).